Consider the following 474-residue polypeptide: tRNA-2-methylthio-N(6)-dimethylallyladenosine synthase (474 aa).

The region spanning 3–120 (KKLHIKTWGC…LPDMIEQVRR (118 aa)) is the MTTase N-terminal domain. The [4Fe-4S] cluster site is built by cysteine 12, cysteine 49, cysteine 83, cysteine 157, cysteine 161, and cysteine 164. The region spanning 143-375 (RAEGPTAFVS…QDRITQQAMR (233 aa)) is the Radical SAM core domain. The region spanning 378–441 (RHMMGTVQRI…TNSLRGKFIR (64 aa)) is the TRAM domain.

The protein belongs to the methylthiotransferase family. MiaB subfamily. In terms of assembly, monomer. It depends on [4Fe-4S] cluster as a cofactor.

It localises to the cytoplasm. The enzyme catalyses N(6)-dimethylallyladenosine(37) in tRNA + (sulfur carrier)-SH + AH2 + 2 S-adenosyl-L-methionine = 2-methylsulfanyl-N(6)-dimethylallyladenosine(37) in tRNA + (sulfur carrier)-H + 5'-deoxyadenosine + L-methionine + A + S-adenosyl-L-homocysteine + 2 H(+). Its function is as follows. Catalyzes the methylthiolation of N6-(dimethylallyl)adenosine (i(6)A), leading to the formation of 2-methylthio-N6-(dimethylallyl)adenosine (ms(2)i(6)A) at position 37 in tRNAs that read codons beginning with uridine. This chain is tRNA-2-methylthio-N(6)-dimethylallyladenosine synthase, found in Shewanella sp. (strain MR-7).